We begin with the raw amino-acid sequence, 120 residues long: Ribosome-binding factor A (120 aa).

The protein belongs to the RbfA family. Monomer. Binds 30S ribosomal subunits, but not 50S ribosomal subunits or 70S ribosomes.

The protein resides in the cytoplasm. In terms of biological role, one of several proteins that assist in the late maturation steps of the functional core of the 30S ribosomal subunit. Associates with free 30S ribosomal subunits (but not with 30S subunits that are part of 70S ribosomes or polysomes). Required for efficient processing of 16S rRNA. May interact with the 5'-terminal helix region of 16S rRNA. This is Ribosome-binding factor A from Chlamydia abortus (strain DSM 27085 / S26/3) (Chlamydophila abortus).